We begin with the raw amino-acid sequence, 167 residues long: Shikimate kinase (167 aa).

12–17 is a binding site for ATP; sequence GSGKTT. Thr16 is a Mg(2+) binding site. 3 residues coordinate substrate: Asp34, Arg58, and Gly80. Residue Arg117 participates in ATP binding. Arg135 is a binding site for substrate. Arg152 is a binding site for ATP.

It belongs to the shikimate kinase family. In terms of assembly, monomer. Mg(2+) is required as a cofactor.

It is found in the cytoplasm. It carries out the reaction shikimate + ATP = 3-phosphoshikimate + ADP + H(+). Its pathway is metabolic intermediate biosynthesis; chorismate biosynthesis; chorismate from D-erythrose 4-phosphate and phosphoenolpyruvate: step 5/7. Catalyzes the specific phosphorylation of the 3-hydroxyl group of shikimic acid using ATP as a cosubstrate. The protein is Shikimate kinase of Salinispora arenicola (strain CNS-205).